We begin with the raw amino-acid sequence, 435 residues long: GTPase Obg (435 aa).

Positions M1 to L158 constitute an Obg domain. The region spanning A159–R328 is the OBG-type G domain. GTP is bound by residues G165–S172, F190–T194, D211–G214, N280–D283, and S309–K311. The Mg(2+) site is built by S172 and T192. The region spanning I343–A426 is the OCT domain.

Belongs to the TRAFAC class OBG-HflX-like GTPase superfamily. OBG GTPase family. In terms of assembly, monomer. The cofactor is Mg(2+).

It localises to the cytoplasm. Functionally, an essential GTPase which binds GTP, GDP and possibly (p)ppGpp with moderate affinity, with high nucleotide exchange rates and a fairly low GTP hydrolysis rate. Plays a role in control of the cell cycle, stress response, ribosome biogenesis and in those bacteria that undergo differentiation, in morphogenesis control. The polypeptide is GTPase Obg (Dictyoglomus thermophilum (strain ATCC 35947 / DSM 3960 / H-6-12)).